Here is a 740-residue protein sequence, read N- to C-terminus: Platelet endothelial cell adhesion molecule (740 aa).

Positions 1–27 (MRLRWTQGGNMWLGVLLTLQLCSSLEG) are cleaved as a signal peptide. The Extracellular portion of the chain corresponds to 28–602 (QENSFTINSI…VRVYLAPWKK (575 aa)). 3 Ig-like C2-type domains span residues 35–126 (NSIH…YKVV), 145–223 (GGVV…DSVR), and 236–315 (PKFH…SKVS). N-linked (GlcNAc...) asparagine glycans are attached at residues Asn-52 and Asn-84. 3 disulfide bridges follow: Cys-57–Cys-109, Cys-152–Cys-206, and Cys-256–Cys-304. 8 N-linked (GlcNAc...) asparagine glycosylation sites follow: Asn-284, Asn-301, Asn-320, Asn-357, Asn-372, Asn-436, Asn-456, and Asn-552. 3 Ig-like C2-type domains span residues 328–404 (PKLK…VQIA), 425–494 (GQTI…KVLR), and 500–592 (PVEE…NILA). Cystine bridges form between Cys-347-Cys-387, Cys-432-Cys-477, and Cys-524-Cys-573. The helical transmembrane segment at 603–621 (GLIAVVVIAVIIAVLLLGA) threads the bilayer. Residues 622–740 (RFYFLKKSKA…SRTEGSLDGT (119 aa)) are Cytoplasmic-facing. 2 short sequence motifs (ITIM motif) span residues 690–695 (VEYTEV) and 713–718 (TVYSEI). Phosphotyrosine; by FER is present on residues Tyr-692 and Tyr-715. The tract at residues 697-740 (VTSPEPHRGLGTKGTETVYSEIRKADPDLVENRYSRTEGSLDGT) is disordered. The segment at 711 to 731 (TETVYSEIRKADPDLVENRYS) is membrane-bound segment which detaches upon phosphorylation. The segment covering 717–732 (EIRKADPDLVENRYSR) has biased composition (basic and acidic residues). Positions 723–740 (PDLVENRYSRTEGSLDGT) are may play a role in cytoprotective signaling. Phosphoserine occurs at positions 731 and 736.

In terms of assembly, trans-homodimer (via Ig-like C2-type 1 and Ig-like C2-type 2 domains); trans-homodimerization is required for cell-cell interaction. Forms a complex with BDKRB2 and GNAQ. Interacts with BDKRB2 and GNAQ. Interacts with PTPN11; Tyr-715 is critical for PTPN11 recruitment. Interacts with FER. Interacts with CD177; the interaction is Ca(2+)-dependent; the interaction is direct. In terms of processing, phosphorylated on Ser and Tyr residues by src kinases after cellular activation. Upon activation, phosphorylated on Ser-731 which probably initiates the dissociation of the membrane-interaction segment (residues 711-731) from the cell membrane allowing the sequential phosphorylation of Tyr-715 and Tyr-692. Constitutively phosphorylated on Ser-736 in resting platelets. Phosphorylated on tyrosine residues by FER and FES in response to FCER1 activation. In endothelial cells Fyn mediates mechanical-force (stretch or pull) induced tyrosine phosphorylation. Post-translationally, palmitoylation by ZDHHC21 is necessary for cell surface expression in endothelial cells and enrichment in membrane rafts.

It localises to the cell membrane. The protein localises to the membrane raft. It is found in the cell junction. In terms of biological role, cell adhesion molecule which is required for leukocyte transendothelial migration (TEM) under most inflammatory conditions. Tyr-692 plays a critical role in TEM and is required for efficient trafficking of PECAM1 to and from the lateral border recycling compartment (LBRC) and is also essential for the LBRC membrane to be targeted around migrating leukocytes. Trans-homophilic interaction may play a role in endothelial cell-cell adhesion via cell junctions. Heterophilic interaction with CD177 plays a role in transendothelial migration of neutrophils. Homophilic ligation of PECAM1 prevents macrophage-mediated phagocytosis of neighboring viable leukocytes by transmitting a detachment signal. Promotes macrophage-mediated phagocytosis of apoptotic leukocytes by tethering them to the phagocytic cells; PECAM1-mediated detachment signal appears to be disabled in apoptotic leukocytes. Modulates bradykinin receptor BDKRB2 activation. Regulates bradykinin- and hyperosmotic shock-induced ERK1/2 activation in endothelial cells. Induces susceptibility to atherosclerosis. The chain is Platelet endothelial cell adhesion molecule (PECAM1) from Sus scrofa (Pig).